A 310-amino-acid polypeptide reads, in one-letter code: Putative S-adenosyl-L-methionine-dependent methyltransferase MAP_2076c (310 aa).

S-adenosyl-L-methionine contacts are provided by residues Asp131 and 160–161 (DL).

The protein belongs to the UPF0677 family.

In terms of biological role, exhibits S-adenosyl-L-methionine-dependent methyltransferase activity. In Mycolicibacterium paratuberculosis (strain ATCC BAA-968 / K-10) (Mycobacterium paratuberculosis), this protein is Putative S-adenosyl-L-methionine-dependent methyltransferase MAP_2076c.